A 198-amino-acid chain; its full sequence is Peptidyl-tRNA hydrolase (198 aa).

Residue tyrosine 16 participates in tRNA binding. Catalysis depends on histidine 21, which acts as the Proton acceptor. 3 residues coordinate tRNA: phenylalanine 67, asparagine 69, and asparagine 115.

The protein belongs to the PTH family. Monomer.

It localises to the cytoplasm. It catalyses the reaction an N-acyl-L-alpha-aminoacyl-tRNA + H2O = an N-acyl-L-amino acid + a tRNA + H(+). Its function is as follows. Hydrolyzes ribosome-free peptidyl-tRNAs (with 1 or more amino acids incorporated), which drop off the ribosome during protein synthesis, or as a result of ribosome stalling. In terms of biological role, catalyzes the release of premature peptidyl moieties from peptidyl-tRNA molecules trapped in stalled 50S ribosomal subunits, and thus maintains levels of free tRNAs and 50S ribosomes. This Prochlorococcus marinus (strain MIT 9301) protein is Peptidyl-tRNA hydrolase.